We begin with the raw amino-acid sequence, 77 residues long: Large ribosomal subunit protein bL28 (77 aa).

The protein belongs to the bacterial ribosomal protein bL28 family.

This is Large ribosomal subunit protein bL28 from Polynucleobacter necessarius subsp. necessarius (strain STIR1).